The chain runs to 765 residues: LPS-assembly protein LptD (765 aa).

The first 18 residues, 1 to 18 (MQIRYFLALSLLPQVVLA), serve as a signal peptide directing secretion.

Belongs to the LptD family. Component of the lipopolysaccharide transport and assembly complex. Interacts with LptE and LptA.

It is found in the cell outer membrane. In terms of biological role, together with LptE, is involved in the assembly of lipopolysaccharide (LPS) at the surface of the outer membrane. The sequence is that of LPS-assembly protein LptD from Shewanella sp. (strain ANA-3).